The sequence spans 741 residues: uncharacterized protein (741 aa).

A run of 5 helical transmembrane segments spans residues 34–54, 76–96, 120–140, 156–176, and 187–207; these read WLLW…LLII, LIIP…FING, LAVL…FVSL, LSVF…LIII, and LLLL…AFSI. The span at 404-423 shows a compositional bias: basic and acidic residues; it reads EAEEKERQEKEEKEKAEKDN. Disordered stretches follow at residues 404–473 and 555–647; these read EAEE…FRPR and QKEL…ENAK. Polar residues predominate over residues 424–439; the sequence is GNGQDSNKVNSVSTEP. Composition is skewed to basic and acidic residues over residues 445–465 and 555–573; these read SDAD…DSSK and QKEL…DQKS. The segment covering 623 to 643 has biased composition (acidic residues); the sequence is DNTDESEDKQSEEEEKFDEEI. Transmembrane regions (helical) follow at residues 655–675 and 715–735; these read AFFN…ENGA and VIIA…FFAY.

This sequence to M.pneumoniae MPN_333.

It localises to the cell membrane. This is an uncharacterized protein from Mycoplasma pneumoniae (strain ATCC 29342 / M129 / Subtype 1) (Mycoplasmoides pneumoniae).